The chain runs to 101 residues: Urease subunit beta (101 aa).

Belongs to the urease beta subunit family. Heterotrimer of UreA (gamma), UreB (beta) and UreC (alpha) subunits. Three heterotrimers associate to form the active enzyme.

The protein localises to the cytoplasm. The enzyme catalyses urea + 2 H2O + H(+) = hydrogencarbonate + 2 NH4(+). It participates in nitrogen metabolism; urea degradation; CO(2) and NH(3) from urea (urease route): step 1/1. This Rhizobium etli (strain CIAT 652) protein is Urease subunit beta.